The following is a 132-amino-acid chain: Small ribosomal subunit protein uS8 (132 aa).

It belongs to the universal ribosomal protein uS8 family. Part of the 30S ribosomal subunit. Contacts proteins S5 and S12.

In terms of biological role, one of the primary rRNA binding proteins, it binds directly to 16S rRNA central domain where it helps coordinate assembly of the platform of the 30S subunit. This is Small ribosomal subunit protein uS8 from Gluconobacter oxydans (strain 621H) (Gluconobacter suboxydans).